A 416-amino-acid polypeptide reads, in one-letter code: Putative nucleoside permease NupX (416 aa).

Topologically, residues 1–2 (MD) are periplasmic. Residues 3–23 (VMRSVLGMVVLLTIAFLLSVN) form a helical membrane-spanning segment. Over 24-31 (KKKISLRT) the chain is Cytoplasmic. A helical membrane pass occupies residues 32-52 (VGAALVLQVVIGGIMLWLPPG). Residues 53 to 95 (RWVAEKVAFGVHKVMAYSDAGSAFIFGSLVGPKMDTLFDGAGF) lie on the Periplasmic side of the membrane. Residues 96–118 (IFGFRVLPAIIFVTALVSILYYI) form a helical membrane-spanning segment. Over 119–172 (GVMGILIRILGGIFQKALNISKIESFVAVTTIFLGQNEIPAIVKPFIDRLNRNE) the chain is Cytoplasmic. Residues 173 to 193 (LFTAICSGMASIAGSTMIGYA) traverse the membrane as a helical segment. Residues 194 to 196 (ALG) lie on the Periplasmic side of the membrane. Residues 197–217 (VPVEYLLAASLMAIPGGILFA) form a helical membrane-spanning segment. Topologically, residues 218-246 (RLLSPATESSQVSFNNLSFTETPPKSIIE) are cytoplasmic. Residues 247 to 267 (AAATGAMTGLKIAAGVATVVM) traverse the membrane as a helical segment. Topologically, residues 268–352 (AFVAIIALIN…QTAGTLDAKT (85 aa)) are periplasmic. A helical transmembrane segment spans residues 353-373 (VAIISFALCGFANFGSIGVVV). At 374–394 (GAFSAVAPHRAPEIAQLGLRA) the chain is on the cytoplasmic side. A helical transmembrane segment spans residues 395–415 (LAAATLSNLMSATIAGFFIGL). A topological domain (periplasmic) is located at residue Ala-416.

It belongs to the concentrative nucleoside transporter (CNT) (TC 2.A.41) family.

Its subcellular location is the cell inner membrane. The polypeptide is Putative nucleoside permease NupX (nupX) (Escherichia coli (strain K12)).